A 180-amino-acid chain; its full sequence is Protein GrpE (180 aa).

Residues 1–19 show a composition bias toward basic and acidic residues; that stretch reads MAEKKRAQEQEKVQEDQKM. The tract at residues 1 to 25 is disordered; the sequence is MAEKKRAQEQEKVQEDQKMQNEQNE.

It belongs to the GrpE family. In terms of assembly, homodimer.

The protein localises to the cytoplasm. Participates actively in the response to hyperosmotic and heat shock by preventing the aggregation of stress-denatured proteins, in association with DnaK and GrpE. It is the nucleotide exchange factor for DnaK and may function as a thermosensor. Unfolded proteins bind initially to DnaJ; upon interaction with the DnaJ-bound protein, DnaK hydrolyzes its bound ATP, resulting in the formation of a stable complex. GrpE releases ADP from DnaK; ATP binding to DnaK triggers the release of the substrate protein, thus completing the reaction cycle. Several rounds of ATP-dependent interactions between DnaJ, DnaK and GrpE are required for fully efficient folding. The polypeptide is Protein GrpE (Nitratiruptor sp. (strain SB155-2)).